Reading from the N-terminus, the 275-residue chain is UPF0758 protein RL2068 (275 aa).

The tract at residues 1–45 (MAKGPVSTSSDDELPFETQEPIAADERSFFGGQPQKPSAPNARAA) is disordered. The MPN domain maps to 153 to 275 (VLSSWSSVIQ…HVSLKGLKLI (123 aa)). Zn(2+)-binding residues include H224, H226, and D237. The JAMM motif signature appears at 224-237 (HNHPSGDPTPSRAD).

Belongs to the UPF0758 family.

In Rhizobium johnstonii (strain DSM 114642 / LMG 32736 / 3841) (Rhizobium leguminosarum bv. viciae), this protein is UPF0758 protein RL2068.